The following is a 410-amino-acid chain: Tryptophan synthase beta chain (410 aa).

Lys104 bears the N6-(pyridoxal phosphate)lysine mark.

Belongs to the TrpB family. Tetramer of two alpha and two beta chains. Pyridoxal 5'-phosphate serves as cofactor.

The enzyme catalyses (1S,2R)-1-C-(indol-3-yl)glycerol 3-phosphate + L-serine = D-glyceraldehyde 3-phosphate + L-tryptophan + H2O. It functions in the pathway amino-acid biosynthesis; L-tryptophan biosynthesis; L-tryptophan from chorismate: step 5/5. Functionally, the beta subunit is responsible for the synthesis of L-tryptophan from indole and L-serine. This is Tryptophan synthase beta chain from Thermosynechococcus vestitus (strain NIES-2133 / IAM M-273 / BP-1).